The primary structure comprises 430 residues: MAVKQKQVFVNDRPHLNIGTIGHVDHGKTTLTAAITKFCSEEGGGYEADFRAYDNIDKAPEERQRGITISTAHVEYKTPERHYAHVDCPGHADYIKNMITGAAQMDGAILVVAGTDGAMQQTKEHILLAKQVGVGSIVVYINKCDSSELDEELLELVESDIKDLLISHGFDLPEDEEDGSNPAIIRGSALLALNGEESELGKGSIRKLLAACDKYIALPERAVDGDFLMSIEDVFSISGRGTVVTGKIERGCIKVGDGVEIVGIRDTQKTTCTGVEMFNKLVEQGEAGFNVGILLRGSKREDVCRGQVLCKPGSITPHRKLRARIVTLTKEEGGRRTGFVSGYKPQFYFRTTDVTGTAYLPVDGAEIVMPGDDLEIFVELLNPIAMEKGSRFAIREGGVTVGAGQVLEIMDSKTDAEIAKMFKIVRAVKN.

In terms of domain architecture, tr-type G spans 13-220 (RPHLNIGTIG…ACDKYIALPE (208 aa)). The tract at residues 22–29 (GHVDHGKT) is G1. A GTP-binding site is contributed by 22-29 (GHVDHGKT). T29 is a Mg(2+) binding site. The interval 66–70 (GITIS) is G2. The tract at residues 87-90 (DCPG) is G3. Residues 87-91 (DCPGH) and 142-145 (NKCD) each bind GTP. The interval 142-145 (NKCD) is G4. Residues 188–190 (SAL) form a G5 region.

It belongs to the TRAFAC class translation factor GTPase superfamily. Classic translation factor GTPase family. EF-Tu/EF-1A subfamily. In terms of assembly, monomer.

The protein resides in the cytoplasm. It catalyses the reaction GTP + H2O = GDP + phosphate + H(+). Functionally, GTP hydrolase that promotes the GTP-dependent binding of aminoacyl-tRNA to the A-site of ribosomes during protein biosynthesis. This chain is Elongation factor Tu, found in Neorickettsia sennetsu (strain ATCC VR-367 / Miyayama) (Ehrlichia sennetsu).